Consider the following 188-residue polypeptide: Photosystem I assembly protein Ycf4 (188 aa).

A run of 2 helical transmembrane segments spans residues 26–46 (YFWA…GLSS) and 70–90 (LLFY…SLLW).

This sequence belongs to the Ycf4 family.

Its subcellular location is the cellular thylakoid membrane. Its function is as follows. Seems to be required for the assembly of the photosystem I complex. In Microcystis aeruginosa (strain NIES-843 / IAM M-2473), this protein is Photosystem I assembly protein Ycf4.